A 283-amino-acid polypeptide reads, in one-letter code: Pantothenate synthetase (283 aa).

30–37 (MGALHEGH) is a binding site for ATP. His-37 serves as the catalytic Proton donor. Position 61 (Gln-61) interacts with (R)-pantoate. Gln-61 contacts beta-alanine. 147–150 (GEKD) serves as a coordination point for ATP. Gln-153 is a binding site for (R)-pantoate. ATP is bound by residues Ile-176 and 184–187 (VSSR).

The protein belongs to the pantothenate synthetase family. As to quaternary structure, homodimer.

Its subcellular location is the cytoplasm. The enzyme catalyses (R)-pantoate + beta-alanine + ATP = (R)-pantothenate + AMP + diphosphate + H(+). It participates in cofactor biosynthesis; (R)-pantothenate biosynthesis; (R)-pantothenate from (R)-pantoate and beta-alanine: step 1/1. Catalyzes the condensation of pantoate with beta-alanine in an ATP-dependent reaction via a pantoyl-adenylate intermediate. The sequence is that of Pantothenate synthetase from Pelodictyon phaeoclathratiforme (strain DSM 5477 / BU-1).